The following is a 216-amino-acid chain: Somatotropin (216 aa).

The signal sequence occupies residues methionine 1–alanine 26. Histidine 45 is a binding site for Zn(2+). A disulfide bond links cysteine 78 and cysteine 189. Position 131 is a phosphoserine (serine 131). Glutamate 198 lines the Zn(2+) pocket. Cysteines 206 and 214 form a disulfide.

Belongs to the somatotropin/prolactin family.

The protein resides in the secreted. Plays an important role in growth control. Its major role in stimulating body growth is to stimulate the liver and other tissues to secrete IGF1. It stimulates both the differentiation and proliferation of myoblasts. It also stimulates amino acid uptake and protein synthesis in muscle and other tissues. The chain is Somatotropin (GH1) from Hippopotamus amphibius (Hippopotamus).